Consider the following 556-residue polypeptide: Glutamine--tRNA ligase (556 aa).

Residues 34-44 (PEPNGYLHIGH) carry the 'HIGH' region motif. ATP contacts are provided by residues 35–37 (EPN) and 41–47 (HIGHAKS). Positions 67 and 212 each coordinate L-glutamine. ATP-binding positions include Thr231, 261 to 262 (RL), and 269 to 271 (MSK). The 'KMSKS' region motif lies at 268-272 (VMSKR).

It belongs to the class-I aminoacyl-tRNA synthetase family. Monomer.

Its subcellular location is the cytoplasm. The enzyme catalyses tRNA(Gln) + L-glutamine + ATP = L-glutaminyl-tRNA(Gln) + AMP + diphosphate. The polypeptide is Glutamine--tRNA ligase (Vibrio vulnificus (strain YJ016)).